A 349-amino-acid chain; its full sequence is Isopentenyl-diphosphate delta-isomerase (349 aa).

5–6 contributes to the substrate binding site; it reads RK. FMN contacts are provided by residues Ser-62, 63–65, Ser-93, and Asn-122; that span reads AIT. 93-95 contributes to the substrate binding site; that stretch reads SQR. Gln-151 serves as a coordination point for substrate. Glu-152 lines the Mg(2+) pocket. FMN contacts are provided by residues Lys-183, Thr-213, 259–261, and 280–281; these read GIR and AL.

It belongs to the IPP isomerase type 2 family. In terms of assembly, homooctamer. Dimer of tetramers. FMN serves as cofactor. The cofactor is NADPH. Mg(2+) is required as a cofactor.

Its subcellular location is the cytoplasm. The enzyme catalyses isopentenyl diphosphate = dimethylallyl diphosphate. In terms of biological role, involved in the biosynthesis of isoprenoids. Catalyzes the 1,3-allylic rearrangement of the homoallylic substrate isopentenyl (IPP) to its allylic isomer, dimethylallyl diphosphate (DMAPP). The sequence is that of Isopentenyl-diphosphate delta-isomerase from Methanothermobacter thermautotrophicus (strain ATCC 29096 / DSM 1053 / JCM 10044 / NBRC 100330 / Delta H) (Methanobacterium thermoautotrophicum).